A 195-amino-acid polypeptide reads, in one-letter code: Probable DNA-directed RNA polymerase subunit delta (195 aa).

The HTH HARE-type domain maps to 14-83 (LSMIEVARAI…GDNKWGLRSW (70 aa)). Composition is skewed to acidic residues over residues 119–138 (GDEDAIDYSDDDPEDEDSYE) and 145–195 (YDDE…GEEE). The segment at 119–195 (GDEDAIDYSD…SDDDAEGEEE (77 aa)) is disordered.

The protein belongs to the RpoE family. In terms of assembly, RNAP is composed of a core of 2 alpha, a beta and a beta' subunits. The core is associated with a delta subunit and one of several sigma factors.

Its function is as follows. Participates in both the initiation and recycling phases of transcription. In the presence of the delta subunit, RNAP displays an increased specificity of transcription, a decreased affinity for nucleic acids, and an increased efficiency of RNA synthesis because of enhanced recycling. The protein is Probable DNA-directed RNA polymerase subunit delta of Streptococcus gordonii (strain Challis / ATCC 35105 / BCRC 15272 / CH1 / DL1 / V288).